Consider the following 246-residue polypeptide: Acetoacetate decarboxylase (246 aa).

The active-site Schiff-base intermediate with acetoacetate is the Lys-116.

The protein belongs to the ADC family.

It catalyses the reaction acetoacetate + H(+) = acetone + CO2. In terms of biological role, catalyzes the conversion of acetoacetate to acetone and carbon dioxide. This chain is Acetoacetate decarboxylase, found in Burkholderia ambifaria (strain MC40-6).